The chain runs to 224 residues: Putative N-acetylmannosamine-6-phosphate 2-epimerase (224 aa).

It belongs to the NanE family.

It catalyses the reaction an N-acyl-D-glucosamine 6-phosphate = an N-acyl-D-mannosamine 6-phosphate. It functions in the pathway amino-sugar metabolism; N-acetylneuraminate degradation; D-fructose 6-phosphate from N-acetylneuraminate: step 3/5. In terms of biological role, converts N-acetylmannosamine-6-phosphate (ManNAc-6-P) to N-acetylglucosamine-6-phosphate (GlcNAc-6-P). The protein is Putative N-acetylmannosamine-6-phosphate 2-epimerase of Staphylococcus carnosus (strain TM300).